We begin with the raw amino-acid sequence, 209 residues long: Kynurenine formamidase (209 aa).

W20 serves as a coordination point for substrate. Zn(2+) contacts are provided by H50, H54, and D56. The active-site Proton donor/acceptor is H60. Residues H161 and E173 each contribute to the Zn(2+) site.

This sequence belongs to the Cyclase 1 superfamily. KynB family. Homodimer. Zn(2+) serves as cofactor.

The catalysed reaction is N-formyl-L-kynurenine + H2O = L-kynurenine + formate + H(+). It functions in the pathway amino-acid degradation; L-tryptophan degradation via kynurenine pathway; L-kynurenine from L-tryptophan: step 2/2. Catalyzes the hydrolysis of N-formyl-L-kynurenine to L-kynurenine, the second step in the kynurenine pathway of tryptophan degradation. The chain is Kynurenine formamidase from Bacillus thuringiensis subsp. konkukian (strain 97-27).